The chain runs to 250 residues: Phosphoribosylaminoimidazole-succinocarboxamide synthase (250 aa).

The protein belongs to the SAICAR synthetase family.

It carries out the reaction 5-amino-1-(5-phospho-D-ribosyl)imidazole-4-carboxylate + L-aspartate + ATP = (2S)-2-[5-amino-1-(5-phospho-beta-D-ribosyl)imidazole-4-carboxamido]succinate + ADP + phosphate + 2 H(+). Its pathway is purine metabolism; IMP biosynthesis via de novo pathway; 5-amino-1-(5-phospho-D-ribosyl)imidazole-4-carboxamide from 5-amino-1-(5-phospho-D-ribosyl)imidazole-4-carboxylate: step 1/2. The polypeptide is Phosphoribosylaminoimidazole-succinocarboxamide synthase (Parasynechococcus marenigrum (strain WH8102)).